Consider the following 442-residue polypeptide: Trigger factor (442 aa).

The PPIase FKBP-type domain maps to 176 to 259; it reads GDFISLSLYV…VNAVIEISSP (84 aa).

It belongs to the FKBP-type PPIase family. Tig subfamily.

The protein resides in the cytoplasm. The catalysed reaction is [protein]-peptidylproline (omega=180) = [protein]-peptidylproline (omega=0). Functionally, involved in protein export. Acts as a chaperone by maintaining the newly synthesized protein in an open conformation. Functions as a peptidyl-prolyl cis-trans isomerase. This is Trigger factor from Chlamydia trachomatis serovar L2 (strain ATCC VR-902B / DSM 19102 / 434/Bu).